A 289-amino-acid polypeptide reads, in one-letter code: Phospholipase A1 (289 aa).

An N-terminal signal peptide occupies residues 1 to 20 (MRTLQGWLLPVFMLPMAVYA). Residues 21-52 (QEATVKEVHDAPAVRGSIIANMLQEHDNPFTL) lie on the Periplasmic side of the membrane. Residues 53-65 (YPYDTNYLIYTQT) traverse the membrane as a beta stranded segment. At 66–84 (SDLNKEAIASYDWAENARK) the chain is on the extracellular side. A beta stranded transmembrane segment spans residues 85–99 (DEVKFQLSLAFPLWR). Residues 100 to 105 (GILGPN) lie on the Periplasmic side of the membrane. A beta stranded transmembrane segment spans residues 106–118 (SVLGASYTQKSWW). Over 119–128 (QLSNSEESSP) the chain is Extracellular. S126 lines the Ca(2+) pocket. The chain crosses the membrane as a beta stranded span at residues 129–148 (FRETNYEPQLFLGFATDYRF). Topologically, residues 149–150 (AG) are periplasmic. The chain crosses the membrane as a beta stranded span at residues 151–164 (WTLRDVEMGYNHDS). H162 functions as the Proton acceptor in the catalytic mechanism. The active-site Nucleophile is the S164. Residues 165–173 (NGRSDPTSR) are Extracellular-facing. Residues R167 and S172 each coordinate Ca(2+). The chain crosses the membrane as a beta stranded span at residues 174–186 (SWNRLYTRLMAEN). The Periplasmic portion of the chain corresponds to 187–188 (GN). The beta stranded transmembrane segment at 189–198 (WLVEVKPWYV) threads the bilayer. Topologically, residues 199-216 (VGNTDDNPDITKYMGYYQ) are extracellular. Ca(2+) is bound at residue D204. A beta stranded transmembrane segment spans residues 217–223 (LKIGYHL). Topologically, residues 224–225 (GD) are periplasmic. Residues 226-234 (AVLSAKGQY) traverse the membrane as a beta stranded segment. The Extracellular segment spans residues 235-241 (NWNTGYG). A beta stranded transmembrane segment spans residues 242 to 250 (GAELGLSYP). The Periplasmic portion of the chain corresponds to 251–255 (ITKHV). Residues 256-265 (RLYTQVYSGY) traverse the membrane as a beta stranded segment. The Extracellular segment spans residues 266–274 (GESLIDYNF). A beta stranded membrane pass occupies residues 275-286 (NQTRVGVGVMLN). Residues 287–289 (DLF) lie on the Periplasmic side of the membrane.

The protein belongs to the phospholipase A1 family. As to quaternary structure, homodimer; dimerization is reversible, and the dimeric form is the active one. The cofactor is Ca(2+).

It is found in the cell outer membrane. It catalyses the reaction a 1,2-diacyl-sn-glycero-3-phosphocholine + H2O = a 2-acyl-sn-glycero-3-phosphocholine + a fatty acid + H(+). The catalysed reaction is a 1,2-diacyl-sn-glycero-3-phosphocholine + H2O = a 1-acyl-sn-glycero-3-phosphocholine + a fatty acid + H(+). Functionally, hydrolysis of phosphatidylcholine with phospholipase A2 (EC 3.1.1.4) and phospholipase A1 (EC 3.1.1.32) activities. The sequence is that of Phospholipase A1 (pldA) from Escherichia coli O157:H7.